Here is a 725-residue protein sequence, read N- to C-terminus: ATP-dependent DNA helicase II subunit 2 (725 aa).

The region spanning 232 to 478 is the Ku domain; the sequence is LTLGDPQKYP…QQAMSDYVDA (247 aa).

It belongs to the ku80 family. Heterodimer of mus-51/ku70 and mus-52/ku80.

The protein localises to the nucleus. The protein resides in the chromosome. It localises to the telomere. It carries out the reaction ATP + H2O = ADP + phosphate + H(+). In terms of biological role, single-stranded DNA-dependent ATP-dependent helicase. Involved in non-homologous end joining (NHEJ) DNA double strand break repair. DNA-binding is sequence-independent but has a high affinity to nicks in double-stranded DNA and to the ends of duplex DNA. Binds to naturally occurring chromosomal ends, and therefore provides chromosomal end protection. Required also for telomere recombination to repair telomeric ends in the absence of telomerase. ku70, of the ku70/ku80 heterodimer, binds to the stem loop of tlc1, the RNA component of telomerase. Involved in telomere maintenance. Interacts with telomeric repeats and subtelomeric sequences thereby controlling telomere length and protecting against subtelomeric rearrangement. Maintains telomeric chromatin, which is involved in silencing the expression of genes located at the telomere. Required for mating-type switching. The chain is ATP-dependent DNA helicase II subunit 2 (mus-52) from Neurospora crassa (strain ATCC 24698 / 74-OR23-1A / CBS 708.71 / DSM 1257 / FGSC 987).